Reading from the N-terminus, the 383-residue chain is Dual-specificity RNA methyltransferase RlmN (383 aa).

Glutamate 95 (proton acceptor) is an active-site residue. A Radical SAM core domain is found at 101 to 349; the sequence is EETRGTLCVS…TTVRKTRGDD (249 aa). Cysteines 108 and 354 form a disulfide. [4Fe-4S] cluster-binding residues include cysteine 115, cysteine 119, and cysteine 122. Residues 180 to 181, serine 212, 234 to 236, and asparagine 311 contribute to the S-adenosyl-L-methionine site; these read GE and SLH. Cysteine 354 serves as the catalytic S-methylcysteine intermediate.

It belongs to the radical SAM superfamily. RlmN family. It depends on [4Fe-4S] cluster as a cofactor.

The protein resides in the cytoplasm. The enzyme catalyses adenosine(2503) in 23S rRNA + 2 reduced [2Fe-2S]-[ferredoxin] + 2 S-adenosyl-L-methionine = 2-methyladenosine(2503) in 23S rRNA + 5'-deoxyadenosine + L-methionine + 2 oxidized [2Fe-2S]-[ferredoxin] + S-adenosyl-L-homocysteine. The catalysed reaction is adenosine(37) in tRNA + 2 reduced [2Fe-2S]-[ferredoxin] + 2 S-adenosyl-L-methionine = 2-methyladenosine(37) in tRNA + 5'-deoxyadenosine + L-methionine + 2 oxidized [2Fe-2S]-[ferredoxin] + S-adenosyl-L-homocysteine. Its function is as follows. Specifically methylates position 2 of adenine 2503 in 23S rRNA and position 2 of adenine 37 in tRNAs. m2A2503 modification seems to play a crucial role in the proofreading step occurring at the peptidyl transferase center and thus would serve to optimize ribosomal fidelity. This chain is Dual-specificity RNA methyltransferase RlmN, found in Paraburkholderia xenovorans (strain LB400).